A 202-amino-acid polypeptide reads, in one-letter code: Solute carrier family 66 member 3 (202 aa).

Residues 1 to 19 (MEAGLLWFCNWSTLGVCAA) form the signal peptide. The next 4 helical transmembrane spans lie at 33 to 53 (SARG…LVFL), 64 to 84 (LTYL…LFVF), 94 to 114 (LPYM…KWII), and 171 to 191 (LTIL…TATV).

The protein resides in the membrane. The protein is Solute carrier family 66 member 3 (Slc66a3) of Mus musculus (Mouse).